Here is a 266-residue protein sequence, read N- to C-terminus: Elongator complex protein 6 (266 aa).

It belongs to the ELP6 family. As to quaternary structure, component of the elongator complex which consists of ELP1, ELP2, ELP3, ELP4, ELP5 and ELP6.

It localises to the cytoplasm. The protein resides in the nucleus. Its pathway is tRNA modification; 5-methoxycarbonylmethyl-2-thiouridine-tRNA biosynthesis. Functionally, component of the elongator complex which is required for multiple tRNA modifications, including mcm5U (5-methoxycarbonylmethyl uridine), mcm5s2U (5-methoxycarbonylmethyl-2-thiouridine), and ncm5U (5-carbamoylmethyl uridine). The elongator complex catalyzes formation of carboxymethyluridine in the wobble base at position 34 in tRNAs. Involved in cell migration. This Homo sapiens (Human) protein is Elongator complex protein 6.